Consider the following 60-residue polypeptide: Large ribosomal subunit protein uL30 (60 aa).

Belongs to the universal ribosomal protein uL30 family. In terms of assembly, part of the 50S ribosomal subunit.

In Streptomyces filamentosus (Streptomyces roseosporus), this protein is Large ribosomal subunit protein uL30.